Here is a 118-residue protein sequence, read N- to C-terminus: UPF0102 protein Sde_3146 (118 aa).

It belongs to the UPF0102 family.

In Saccharophagus degradans (strain 2-40 / ATCC 43961 / DSM 17024), this protein is UPF0102 protein Sde_3146.